A 904-amino-acid chain; its full sequence is NADH-quinone oxidoreductase subunit G (904 aa).

The 2Fe-2S ferredoxin-type domain occupies 1–83 (MATIHVDGKA…GTWISIDDEE (83 aa)). Residues Cys-34, Cys-45, Cys-48, and Cys-67 each coordinate [2Fe-2S] cluster. The 40-residue stretch at 83-122 (ESKAFRASVVEWLMTNHPHDCPVCEEGGHCHLQDMTVMTG) folds into the 4Fe-4S His(Cys)3-ligated-type domain. Residues His-99, Cys-103, Cys-106, Cys-112, Cys-151, Cys-154, Cys-157, Cys-201, Cys-228, Cys-231, Cys-235, and Cys-263 each contribute to the [4Fe-4S] cluster site. The 4Fe-4S Mo/W bis-MGD-type domain maps to 221 to 277 (MQFAPSICHGCSSGCNISPGERYGELRRIENRFNGSVNQYFLCDRGRFGYGYVNRKD).

Belongs to the complex I 75 kDa subunit family. As to quaternary structure, composed of 13 different subunits. Subunits NuoCD, E, F, and G constitute the peripheral sector of the complex. Requires [2Fe-2S] cluster as cofactor. The cofactor is [4Fe-4S] cluster.

It catalyses the reaction a quinone + NADH + 5 H(+)(in) = a quinol + NAD(+) + 4 H(+)(out). In terms of biological role, NDH-1 shuttles electrons from NADH, via FMN and iron-sulfur (Fe-S) centers, to quinones in the respiratory chain. The immediate electron acceptor for the enzyme in this species is believed to be ubiquinone. Couples the redox reaction to proton translocation (for every two electrons transferred, four hydrogen ions are translocated across the cytoplasmic membrane), and thus conserves the redox energy in a proton gradient. In Pseudomonas putida (strain ATCC 47054 / DSM 6125 / CFBP 8728 / NCIMB 11950 / KT2440), this protein is NADH-quinone oxidoreductase subunit G (nuoG).